The primary structure comprises 268 residues: Undecaprenyl-diphosphatase (268 aa).

7 consecutive transmembrane segments (helical) span residues 41-61 (PGPS…VCYF), 89-109 (IFIG…FVPY), 114-134 (IFRS…LMYI), 155-175 (LIGL…GVTI), 191-211 (FSFL…FISS), 218-238 (FSFF…LLAI), and 248-268 (NGLK…LLNL).

Belongs to the UppP family.

Its subcellular location is the cell inner membrane. The catalysed reaction is di-trans,octa-cis-undecaprenyl diphosphate + H2O = di-trans,octa-cis-undecaprenyl phosphate + phosphate + H(+). Catalyzes the dephosphorylation of undecaprenyl diphosphate (UPP). Confers resistance to bacitracin. This is Undecaprenyl-diphosphatase from Prochlorococcus marinus (strain MIT 9312).